Reading from the N-terminus, the 249-residue chain is (S)-1-Phenylethanol dehydrogenase (249 aa).

NAD(+) contacts are provided by residues 17–19 (NGI), D38, 61–63 (CDV), N89, and Y93. S141 contributes to the substrate binding site. The Proton acceptor role is filled by Y154. Residues K158, 184–187 (PSLV), and T191 contribute to the NAD(+) site.

It belongs to the short-chain dehydrogenases/reductases (SDR) family. Homotetramer.

The enzyme catalyses (S)-1-phenylethanol + NAD(+) = acetophenone + NADH + H(+). Functionally, catalyzes the NAD-dependent stereospecific oxidation of (S)-1-phenylethanol to acetophenone in the degradation of ethylbenzene. This chain is (S)-1-Phenylethanol dehydrogenase (ped), found in Aromatoleum aromaticum (strain DSM 19018 / LMG 30748 / EbN1) (Azoarcus sp. (strain EbN1)).